The following is a 1116-amino-acid chain: MSADAVFCELGARTNFSFLEGAAPAEEMVVFAKKAGLAGLGIADRNSVAGVVRAHAKAKVEGYPFQPGARLVFADGTPDILAYPKNRRGWGHLCRLLSAGNLRSKKGDCTLHLADLLEWQEELLLIVMQGEGRPEPESLEVLLGTLKEHAGNRLYLGLAPHYDGFDRHDFAVLAAIARKAGIGLLATNDALYHDPHYRPLADVVTSIREHVPIAGAGFLLQKNAERHLKGPREMARLFSDYPEAIANTRKFFRELAFSLDELSHQYPDENADGETPAESLRRLVAEGAAERYPEGVPEKVMRQIDYELELIHDKKYEPYFLTVHKLVKFARSVNILCQGRGSAANSSVCFCLGITDVDPQKFTLLFDRFLSKDRDEPPDIDVDFEHERREEVIQYIYRTYGKEHAGLTAAVISYRSRSAGREVAKAFGLSEDVQSALVSSIWGWGTSPFTEEQAKGAGLDAADPLTRRVLAYASLLMNFPRHLSQHVGGFVITRDRLDEVVPIMNTAMPDRYMIEWDKDDLDELKILKVDVLALGMLTCLAKGFKLLEAHYGEPITLAEIYQDHRDAVYDMICRADTVGVFQIESRAQMSMLPRLQPREMYDLVIEVAIVRPGPIQGNMVHPYLKRREAQRRGEAVVYPSPELKAVLERTLGVPLFQEQAMQIAITAAGFSPSEADRLRRAMATFKRTGTIHTFERKMVEGMVANDYEREFAERCFNQIKGFGEYGFPESHAASFASLVYASAWLKTYYPDIFCAALLNAQPMGFYAPAQLVRDAREHGVRMLPVDINHSDWDALLEGEGAFDKNAVHPRHASMREVIKTRKAVRLGFRLVKGLKQTDMKALVARRGEGYRSVHDLWLRSGLSRSVLERLADADAFRSIGLDRRAALWAVKALDEQSAVERLPLFEGAGSDDLQIEPKVALPDMPAGEQVIHDYRTLTLSLKAHPVSFMREDFSRRGILRSRDLAATATGRWVTVAGLVLVRQRPGSANGVIFMTIEDETGIANIIVWEKTFQKYRRQVMGSRLVKVRGRLQNQSGVIHVVADHLEDITPMLGLLRREARRFGVNDRADGALRPSADAREKKKLRQLRLGLPARAAPEGEAAAQVAEVMPKGRNFH.

This sequence belongs to the DNA polymerase type-C family. DnaE2 subfamily.

It is found in the cytoplasm. The enzyme catalyses DNA(n) + a 2'-deoxyribonucleoside 5'-triphosphate = DNA(n+1) + diphosphate. In terms of biological role, DNA polymerase involved in damage-induced mutagenesis and translesion synthesis (TLS). It is not the major replicative DNA polymerase. This chain is Error-prone DNA polymerase 1, found in Rhizobium meliloti (strain 1021) (Ensifer meliloti).